A 551-amino-acid chain; its full sequence is CTP synthase (551 aa).

The interval M1–L267 is amidoligase domain. S15 serves as a coordination point for CTP. Residue S15 coordinates UTP. Position 16–21 (S16–T21) interacts with ATP. Y56 contacts L-glutamine. Position 73 (D73) interacts with ATP. Positions 73 and 141 each coordinate Mg(2+). CTP is bound by residues D148–E150, K188–Q193, and K224. Residues K188 to Q193 and K224 contribute to the UTP site. In terms of domain architecture, Glutamine amidotransferase type-1 spans R292–E534. G355 is an L-glutamine binding site. C382 acts as the Nucleophile; for glutamine hydrolysis in catalysis. L-glutamine is bound by residues L383–Q386, E406, and R462. Catalysis depends on residues H507 and E509.

The protein belongs to the CTP synthase family. Homotetramer.

The enzyme catalyses UTP + L-glutamine + ATP + H2O = CTP + L-glutamate + ADP + phosphate + 2 H(+). It carries out the reaction L-glutamine + H2O = L-glutamate + NH4(+). It catalyses the reaction UTP + NH4(+) + ATP = CTP + ADP + phosphate + 2 H(+). It participates in pyrimidine metabolism; CTP biosynthesis via de novo pathway; CTP from UDP: step 2/2. Allosterically activated by GTP, when glutamine is the substrate; GTP has no effect on the reaction when ammonia is the substrate. The allosteric effector GTP functions by stabilizing the protein conformation that binds the tetrahedral intermediate(s) formed during glutamine hydrolysis. Inhibited by the product CTP, via allosteric rather than competitive inhibition. In terms of biological role, catalyzes the ATP-dependent amination of UTP to CTP with either L-glutamine or ammonia as the source of nitrogen. Regulates intracellular CTP levels through interactions with the four ribonucleotide triphosphates. The protein is CTP synthase of Rubrobacter xylanophilus (strain DSM 9941 / JCM 11954 / NBRC 16129 / PRD-1).